A 61-amino-acid chain; its full sequence is Small ribosomal subunit protein uS14 (61 aa).

The Zn(2+) site is built by C24, C27, C40, and C43.

It belongs to the universal ribosomal protein uS14 family. Zinc-binding uS14 subfamily. In terms of assembly, part of the 30S ribosomal subunit. Contacts proteins S3 and S10. Zn(2+) serves as cofactor.

Its function is as follows. Binds 16S rRNA, required for the assembly of 30S particles and may also be responsible for determining the conformation of the 16S rRNA at the A site. The protein is Small ribosomal subunit protein uS14 of Carboxydothermus hydrogenoformans (strain ATCC BAA-161 / DSM 6008 / Z-2901).